Here is a 363-residue protein sequence, read N- to C-terminus: Nucleoporin SEH1 (363 aa).

6 WD repeats span residues 15-54, 60-101, 108-149, 158-206, 223-264, and 287-326; these read AHRDLIHCVSFDPHGRRMATCASDMTMAIWDRKPDGNWRR, CHGG…SEKD, QWIR…RIYE, RWNL…VIYE, DLPC…SAIL, and GDHRKAWRLRYNLMGSVISSTSLDGTLRSWKSLFVNQWVK.

Belongs to the WD repeat SEC13 family. Component of the nuclear pore complex (NPC). Probably part of the GATOR complex.

The protein resides in the nucleus. It localises to the nuclear pore complex. The protein localises to the lysosome membrane. Its subcellular location is the nucleus envelope. Functionally, probable component of the nuclear pore complex (NPC) which is involved in the trafficking of macromolecules between the cytoplasm and nucleus. Its function is as follows. As a component of the GATOR complex may function in the amino acid-sensing branch of the TORC1 signaling pathway. This Caenorhabditis elegans protein is Nucleoporin SEH1.